Reading from the N-terminus, the 251-residue chain is Cell division protein ZapD (251 aa).

Belongs to the ZapD family. As to quaternary structure, interacts with FtsZ.

Its subcellular location is the cytoplasm. Functionally, cell division factor that enhances FtsZ-ring assembly. Directly interacts with FtsZ and promotes bundling of FtsZ protofilaments, with a reduction in FtsZ GTPase activity. The polypeptide is Cell division protein ZapD (Burkholderia mallei (strain NCTC 10247)).